The primary structure comprises 344 residues: MSSYKLFCMGNPLLDLQVRDGEKLLEKYGLKSNDAILAEEKHLLLYDEIVKEHEVTYVAGGAAQNAARGAAYCLPPKSVVYTGCVGDDDLAEQLKAANKREGLDEAYLVKKGEKTGACAVIITGHDRSLVTTLRAAEKFEQSHLSSEAVAPLVDAVQFYYMEGYFVTHGLASALELAGKSAAKSKCFVLNFSAPFIPQFFMPAIQQLLPYVDIVIANESEAEAWASASGHPAPTDLAAVAKSLAMQPKTNPARPRVVIFTHGAEETVVVNSAEPGRVRTFKVDKLAEGEIVDTNGAGDAFAGGFLGALVAGRELDDSVEAGHKLAKISIQQIGPQFKWPKVQIL.

Asp-298 is a catalytic residue.

Belongs to the carbohydrate kinase PfkB family. It depends on Mg(2+) as a cofactor.

It catalyses the reaction adenosine + ATP = AMP + ADP + H(+). It participates in purine metabolism; AMP biosynthesis via salvage pathway; AMP from adenosine: step 1/1. In Schizophyllum commune (Split gill fungus), this protein is Adenosine kinase (ADK).